We begin with the raw amino-acid sequence, 382 residues long: Succinyl-diaminopimelate desuccinylase (382 aa).

Residue histidine 73 coordinates Zn(2+). Residue aspartate 75 is part of the active site. Aspartate 106 is a binding site for Zn(2+). Catalysis depends on glutamate 140, which acts as the Proton acceptor. Residues glutamate 141, glutamate 169, and histidine 355 each coordinate Zn(2+).

Belongs to the peptidase M20A family. DapE subfamily. Homodimer. Zn(2+) serves as cofactor. Requires Co(2+) as cofactor.

The enzyme catalyses N-succinyl-(2S,6S)-2,6-diaminopimelate + H2O = (2S,6S)-2,6-diaminopimelate + succinate. It functions in the pathway amino-acid biosynthesis; L-lysine biosynthesis via DAP pathway; LL-2,6-diaminopimelate from (S)-tetrahydrodipicolinate (succinylase route): step 3/3. In terms of biological role, catalyzes the hydrolysis of N-succinyl-L,L-diaminopimelic acid (SDAP), forming succinate and LL-2,6-diaminopimelate (DAP), an intermediate involved in the bacterial biosynthesis of lysine and meso-diaminopimelic acid, an essential component of bacterial cell walls. In Leptothrix cholodnii (strain ATCC 51168 / LMG 8142 / SP-6) (Leptothrix discophora (strain SP-6)), this protein is Succinyl-diaminopimelate desuccinylase.